The primary structure comprises 299 residues: tRNA pseudouridine synthase A (299 aa).

Catalysis depends on Asp-67, which acts as the Nucleophile. Residue Tyr-125 coordinates substrate.

It belongs to the tRNA pseudouridine synthase TruA family. Homodimer.

The enzyme catalyses uridine(38/39/40) in tRNA = pseudouridine(38/39/40) in tRNA. Its function is as follows. Formation of pseudouridine at positions 38, 39 and 40 in the anticodon stem and loop of transfer RNAs. The sequence is that of tRNA pseudouridine synthase A from Parasynechococcus marenigrum (strain WH8102).